A 622-amino-acid chain; its full sequence is Dopamine beta-hydroxylase (622 aa).

Residues 1–20 are Cytoplasmic-facing; sequence MQAHLSHQPCWSSLPSPSVR. Residues 21 to 41 form a helical; Signal-anchor for type II membrane protein membrane-spanning segment; it reads EAASMYGTAVAIFLVILVAAL. The Intragranular portion of the chain corresponds to 42–621; sequence RGSEPPESPF…TVPITTEADA (580 aa). A DOMON domain is found at 61 to 177; it reads GILELSWNVS…DTVHLVYGIL (117 aa). Residues N68 and N188 are each glycosylated (N-linked (GlcNAc...) asparagine). Intrachain disulfides connect C158/C600, C236/C287, C273/C299, C394/C507, C398/C569, and C470/C492. Y234 is a catalytic residue. Residues H266 and H267 each contribute to the Cu(2+) site. Cu(2+) is bound at residue H337. Phosphoserine; by CaMK is present on S350. H416 is an active-site residue. Positions 416 and 418 each coordinate Cu(2+). N-linked (GlcNAc...) asparagine glycosylation occurs at N476. M491 contacts Cu(2+). N570 is a glycosylation site (N-linked (GlcNAc...) asparagine). The disordered stretch occupies residues 594 to 622; the sequence is EEPTPRCPIRQTQSPANPTVPITTEADAE. The segment covering 603–615 has biased composition (polar residues); that stretch reads RQTQSPANPTVPI.

Belongs to the copper type II ascorbate-dependent monooxygenase family. Homotetramer; composed of two disulfide-linked dimers. The cofactor is Cu(2+). Proteolytic cleavage after the membrane-anchor leads to the release of the soluble form. Post-translationally, N-glycosylated. Detected in adrenal gland secretory granules (at protein level). Detected in adrenal gland.

The protein resides in the cytoplasmic vesicle. It is found in the secretory vesicle lumen. The protein localises to the secretory vesicle. It localises to the chromaffin granule lumen. Its subcellular location is the secretory vesicle membrane. The protein resides in the chromaffin granule membrane. The catalysed reaction is dopamine + 2 L-ascorbate + O2 = (R)-noradrenaline + 2 monodehydro-L-ascorbate radical + H2O. It functions in the pathway catecholamine biosynthesis; (R)-noradrenaline biosynthesis; (R)-noradrenaline from dopamine: step 1/1. Catalyzes the hydroxylation of dopamine to noradrenaline (also known as norepinephrine), and is thus vital for regulation of these neurotransmitters. The protein is Dopamine beta-hydroxylase (Dbh) of Mus musculus (Mouse).